The primary structure comprises 433 residues: Sulfhydrylase FUB7 (433 aa).

Lys-211 bears the N6-(pyridoxal phosphate)lysine mark.

It belongs to the trans-sulfuration enzymes family. The cofactor is pyridoxal 5'-phosphate.

Its pathway is mycotoxin biosynthesis. Sulfhydrylase; part of the gene cluster that mediates the biosynthesis of fusaric acid, a mycotoxin with low to moderate toxicity to animals and humans, but with high phytotoxic properties. L-aspartate is suggested as fusaric acid amino acid precursor that is activated and further processed to O-acetyl-L-homoserine by cluster enzymes aspartate kinase FUB3 and homoserine O-acetyltransferase FUB5, as well as enzymes of the primary metabolism. The polyketide synthase (PKS) FUB1 generates the triketide trans-2-hexenal which is presumptively released by the hydrolase FUB4 and linked to the NRPS-bound amino acid precursor by NAD(P)-dependent dehydrogenase FUB6. FUB1, FUB4, and the non-canonical NRPS Fub8 may form an enzyme complex. Further processing of the NRPS-bound intermediate might be carried out by FUB6 and the O-acetylhomoserine FUB7, enabling a spontaneous electrocyclization to close the carbon backbone of fusaric acid. Dihydrofusaric acid is likely to be released via reduction by the thioester reductase (TR) domain of FUB8 whereupon the final oxidation to fusaric acid may (also) be performed by the FMN-dependent dehydrogenase FUB9. The chain is Sulfhydrylase FUB7 from Gibberella moniliformis (strain M3125 / FGSC 7600) (Maize ear and stalk rot fungus).